Reading from the N-terminus, the 65-residue chain is Large ribosomal subunit protein bL35 (65 aa).

It belongs to the bacterial ribosomal protein bL35 family.

The chain is Large ribosomal subunit protein bL35 from Photorhabdus laumondii subsp. laumondii (strain DSM 15139 / CIP 105565 / TT01) (Photorhabdus luminescens subsp. laumondii).